Consider the following 119-residue polypeptide: Phosphoribosyl-AMP cyclohydrolase (119 aa).

Residue aspartate 77 participates in Mg(2+) binding. A Zn(2+)-binding site is contributed by cysteine 78. Residues aspartate 79 and aspartate 81 each coordinate Mg(2+). Zn(2+) contacts are provided by cysteine 94 and cysteine 101.

It belongs to the PRA-CH family. In terms of assembly, homodimer. Mg(2+) serves as cofactor. Requires Zn(2+) as cofactor.

The protein resides in the cytoplasm. The enzyme catalyses 1-(5-phospho-beta-D-ribosyl)-5'-AMP + H2O = 1-(5-phospho-beta-D-ribosyl)-5-[(5-phospho-beta-D-ribosylamino)methylideneamino]imidazole-4-carboxamide. It functions in the pathway amino-acid biosynthesis; L-histidine biosynthesis; L-histidine from 5-phospho-alpha-D-ribose 1-diphosphate: step 3/9. Functionally, catalyzes the hydrolysis of the adenine ring of phosphoribosyl-AMP. The sequence is that of Phosphoribosyl-AMP cyclohydrolase from Ruegeria pomeroyi (strain ATCC 700808 / DSM 15171 / DSS-3) (Silicibacter pomeroyi).